The sequence spans 50 residues: Sperm protamine P1 (50 aa).

It belongs to the protamine P1 family. As to expression, testis.

Its subcellular location is the nucleus. The protein localises to the chromosome. Its function is as follows. Protamines substitute for histones in the chromatin of sperm during the haploid phase of spermatogenesis. They compact sperm DNA into a highly condensed, stable and inactive complex. This chain is Sperm protamine P1 (PRM1), found in Trachypithecus phayrei (Phayre's leaf monkey).